A 640-amino-acid chain; its full sequence is RecBCD enzyme subunit RecD (640 aa).

Position 194-201 (194-201) interacts with ATP; sequence GGPGTGKT.

The protein belongs to the RecD family. As to quaternary structure, heterotrimer of RecB, RecC and RecD. All subunits contribute to DNA-binding.

The catalysed reaction is Couples ATP hydrolysis with the unwinding of duplex DNA at the replication fork by translocating in the 5'-3' direction. This creates two antiparallel DNA single strands (ssDNA). The leading ssDNA polymer is the template for DNA polymerase III holoenzyme which synthesizes a continuous strand.. The enzyme catalyses ATP + H2O = ADP + phosphate + H(+). In terms of biological role, a helicase/nuclease that prepares dsDNA breaks (DSB) for recombinational DNA repair. Binds to DSBs and unwinds DNA via a highly rapid and processive ATP-dependent bidirectional helicase activity. Unwinds dsDNA until it encounters a Chi (crossover hotspot instigator) sequence from the 3' direction. Cuts ssDNA a few nucleotides 3' to the Chi site. The properties and activities of the enzyme are changed at Chi. The Chi-altered holoenzyme produces a long 3'-ssDNA overhang and facilitates RecA-binding to the ssDNA for homologous DNA recombination and repair. Holoenzyme degrades any linearized DNA that is unable to undergo homologous recombination. In the holoenzyme this subunit has ssDNA-dependent ATPase and 5'-3' helicase activity. When added to pre-assembled RecBC greatly stimulates nuclease activity and augments holoenzyme processivity. Negatively regulates the RecA-loading ability of RecBCD. The chain is RecBCD enzyme subunit RecD from Haemophilus influenzae (strain ATCC 51907 / DSM 11121 / KW20 / Rd).